A 254-amino-acid chain; its full sequence is rRNA N-glycosylase sapovaccarin-S1 (254 aa).

It belongs to the ribosome-inactivating protein family. Type 1 RIP subfamily. Expressed in seeds; most abundant in the perisperm.

It carries out the reaction Endohydrolysis of the N-glycosidic bond at one specific adenosine on the 28S rRNA.. Its function is as follows. Exhibits N-glycosylase activity. Catalyzes the release of one adenine from a ribosome. Acts as a ribosome-inactivating protein and inhibits protein synthesis in a rabbit-reticulocyte lysate system and in various cell lines (in vitro). Induces cell death in Huh-7 liver cells. May contribute to the protection against plant pests and predators or play a role in regulating the death of plant cells. The chain is rRNA N-glycosylase sapovaccarin-S1 from Gypsophila vaccaria (Cow soapwort).